Here is a 145-residue protein sequence, read N- to C-terminus: MDIEQVMQYLPHRYPFLLVDKVTELELGKRITAVKNVTINEPFFNGHFPGAPVMPGVLILEAMAQAAGILSFKTKNYSPEQIGIIYFAGIDGARFKKPVKPGDQLVLKAEIVREVRGIWKYTGRAEVDGALVAEAELMATLRDKP.

Histidine 47 is a catalytic residue.

The protein belongs to the thioester dehydratase family. FabZ subfamily.

It localises to the cytoplasm. It carries out the reaction a (3R)-hydroxyacyl-[ACP] = a (2E)-enoyl-[ACP] + H2O. Functionally, involved in unsaturated fatty acids biosynthesis. Catalyzes the dehydration of short chain beta-hydroxyacyl-ACPs and long chain saturated and unsaturated beta-hydroxyacyl-ACPs. In Thiobacillus denitrificans (strain ATCC 25259 / T1), this protein is 3-hydroxyacyl-[acyl-carrier-protein] dehydratase FabZ.